The chain runs to 117 residues: Ig heavy chain V region J558 (117 aa).

In terms of domain architecture, Ig-like spans 1–116 (EVQLQQSGPE…WGAGTTVTVS (116 aa)). Cys22 and Cys96 are oxidised to a cystine.

In Mus musculus (Mouse), this protein is Ig heavy chain V region J558.